Here is a 341-residue protein sequence, read N- to C-terminus: Casein kinase I isoform alpha (341 aa).

The region spanning 16 to 284 (YKLIRKIGSG…YLRQLFRILF (269 aa)) is the Protein kinase domain. ATP-binding positions include 22-30 (IGSGSFGDI) and K45. The active-site Proton acceptor is D135. Positions 306-320 (QSQSSGVPGTNTTTQ) are enriched in polar residues. Positions 306-341 (QSQSSGVPGTNTTTQGATVPSAGVPAGVAPGGTTPQ) are disordered. Over residues 321–341 (GATVPSAGVPAGVAPGGTTPQ) the composition is skewed to low complexity.

This sequence belongs to the protein kinase superfamily. CK1 Ser/Thr protein kinase family. Casein kinase I subfamily.

It catalyses the reaction L-seryl-[protein] + ATP = O-phospho-L-seryl-[protein] + ADP + H(+). The enzyme catalyses L-threonyl-[protein] + ATP = O-phospho-L-threonyl-[protein] + ADP + H(+). The sequence is that of Casein kinase I isoform alpha (kin-19) from Caenorhabditis elegans.